Here is a 348-residue protein sequence, read N- to C-terminus: Thioesterase-like protein TwmA (348 aa).

It participates in secondary metabolite biosynthesis. Functionally, thioesterase-like protein; part of the gene cluster that mediates the biosynthesis of wortmanamides A and B, reduced long-chain polyketides amidated with a specific omega-amino acid, 5-aminopentanoic acid (5PA). The PKS modules of TwmB are involved in the synthesis of the polyketide backbone, whereas the non-canonical C domain of TwmB is a bonafide condensation domain that specifically selects 5PA and catalyzes amidation to release polyketide chain. The C domain clearly prefers C16 and C18 fatty acyl substrates, which is consistent with simultaneous formation of both octaketide and nonaketide acyl amides wortmanamides A and B. Because TwmB lacks a designated enoylreductase (ER) domain, the required activity is provided the enoyl reductase TwmE. The roles of the remaining enzymes have still to be clarified. The sequence is that of Thioesterase-like protein TwmA from Talaromyces wortmannii (Penicillium wortmannii).